A 184-amino-acid chain; its full sequence is Transposon Tn917 resolvase (184 aa).

In terms of domain architecture, Resolvase/invertase-type recombinase catalytic spans M1–G134. S9 (O-(5'-phospho-DNA)-serine intermediate) is an active-site residue. Residues I161–N180 constitute a DNA-binding region (H-T-H motif).

It belongs to the site-specific recombinase resolvase family.

Its function is as follows. Resolvase catalyzes the resolution (a site-specific recombination) of the cointegrated replicon to yield the final transposition products. The chain is Transposon Tn917 resolvase (tnpR) from Enterococcus faecalis (Streptococcus faecalis).